The chain runs to 113 residues: Major basic nuclear protein 1 (113 aa).

Residues 1-20 are disordered; sequence MAPKMKAAMKAMKAPAMKGK.

The protein localises to the nucleus. The protein is Major basic nuclear protein 1 (HCc1) of Crypthecodinium cohnii (Dinoflagellate).